We begin with the raw amino-acid sequence, 231 residues long: Orotidine 5'-phosphate decarboxylase (231 aa).

Substrate-binding positions include D11, K33, 60–69 (DLKFHDIPNT), T120, R181, Q190, G210, and R211. The Proton donor role is filled by K62.

This sequence belongs to the OMP decarboxylase family. Type 1 subfamily. In terms of assembly, homodimer.

It carries out the reaction orotidine 5'-phosphate + H(+) = UMP + CO2. The protein operates within pyrimidine metabolism; UMP biosynthesis via de novo pathway; UMP from orotate: step 2/2. Its function is as follows. Catalyzes the decarboxylation of orotidine 5'-monophosphate (OMP) to uridine 5'-monophosphate (UMP). The chain is Orotidine 5'-phosphate decarboxylase from Photobacterium profundum (strain SS9).